The primary structure comprises 241 residues: Large ribosomal subunit protein uL3 (241 aa).

The disordered stretch occupies residues 140–168; that stretch reads SHRSIGSTGGRQDPGKTFKNKKMPGHMGD. Residue Q151 is modified to N5-methylglutamine.

The protein belongs to the universal ribosomal protein uL3 family. Part of the 50S ribosomal subunit. Forms a cluster with proteins L14 and L19. In terms of processing, methylated by PrmB.

Functionally, one of the primary rRNA binding proteins, it binds directly near the 3'-end of the 23S rRNA, where it nucleates assembly of the 50S subunit. The sequence is that of Large ribosomal subunit protein uL3 from Azorhizobium caulinodans (strain ATCC 43989 / DSM 5975 / JCM 20966 / LMG 6465 / NBRC 14845 / NCIMB 13405 / ORS 571).